We begin with the raw amino-acid sequence, 287 residues long: Cis-prenyltransferase 7, chloroplastic (287 aa).

The N-terminal 34 residues, 1 to 34, are a transit peptide targeting the chloroplast; the sequence is MLSLGFSLPPPSDNKLIITNNNQYNYRTNLANVC. The active site involves Asp-61.

Belongs to the UPP synthase family. Requires Mg(2+) as cofactor. As to expression, expressed in leaf trichomes and stem trichomes.

Its subcellular location is the plastid. The protein resides in the chloroplast. Functionally, uses geranylgeranyl diphosphate to catalyze the cis-prenyl chain elongation and produce polyprenyl diphosphate with a chain of 35 carbons. This is Cis-prenyltransferase 7, chloroplastic from Solanum lycopersicum (Tomato).